Here is a 469-residue protein sequence, read N- to C-terminus: Adenosylhomocysteinase (469 aa).

3 residues coordinate substrate: threonine 63, aspartate 139, and glutamate 164. 165-167 (TTT) provides a ligand contact to NAD(+). Positions 194 and 198 each coordinate substrate. NAD(+)-binding positions include asparagine 199, 228-233 (GYGDVG), glutamate 251, asparagine 300, 321-323 (IGH), and asparagine 375.

Belongs to the adenosylhomocysteinase family. Requires NAD(+) as cofactor.

The protein resides in the cytoplasm. It catalyses the reaction S-adenosyl-L-homocysteine + H2O = L-homocysteine + adenosine. The protein operates within amino-acid biosynthesis; L-homocysteine biosynthesis; L-homocysteine from S-adenosyl-L-homocysteine: step 1/1. Its function is as follows. May play a key role in the regulation of the intracellular concentration of adenosylhomocysteine. The sequence is that of Adenosylhomocysteinase from Pseudomonas entomophila (strain L48).